Reading from the N-terminus, the 656-residue chain is Chromosomal replication initiator protein DnaA (656 aa).

The segment at Met1 to Pro100 is domain I, interacts with DnaA modulators. The tract at residues Thr91–Pro313 is disordered. Residues Gly97 to Arg109 are compositionally biased toward pro residues. The segment at Gln101 to Ala315 is domain II. Basic and acidic residues-rich tracts occupy residues Gly126–Ala144 and Gln231–Pro273. A compositionally biased stretch (low complexity) spans Gly291–Pro313. The tract at residues Arg316–Ala532 is domain III, AAA+ region. The ATP site is built by Gly360, Gly362, Lys363, and Thr364. The domain IV, binds dsDNA stretch occupies residues Ser533–Gly656.

The protein belongs to the DnaA family. Oligomerizes as a right-handed, spiral filament on DNA at oriC.

It localises to the cytoplasm. Its function is as follows. Plays an essential role in the initiation and regulation of chromosomal replication. ATP-DnaA binds to the origin of replication (oriC) to initiate formation of the DNA replication initiation complex once per cell cycle. Binds the DnaA box (a 9 base pair repeat at the origin) and separates the double-stranded (ds)DNA. Forms a right-handed helical filament on oriC DNA; dsDNA binds to the exterior of the filament while single-stranded (ss)DNA is stabiized in the filament's interior. The ATP-DnaA-oriC complex binds and stabilizes one strand of the AT-rich DNA unwinding element (DUE), permitting loading of DNA polymerase. After initiation quickly degrades to an ADP-DnaA complex that is not apt for DNA replication. Binds acidic phospholipids. This is Chromosomal replication initiator protein DnaA from Streptomyces coelicolor (strain ATCC BAA-471 / A3(2) / M145).